The chain runs to 372 residues: PqqA peptide cyclase (372 aa).

In terms of domain architecture, Radical SAM core spans Ala-4–Arg-220. [4Fe-4S] cluster is bound by residues Cys-18, Cys-22, and Cys-25.

It belongs to the radical SAM superfamily. PqqE family. As to quaternary structure, interacts with PqqD. The interaction is necessary for activity of PqqE. [4Fe-4S] cluster serves as cofactor.

It catalyses the reaction [PQQ precursor protein] + S-adenosyl-L-methionine = E-Y cross-linked-[PQQ precursor protein] + 5'-deoxyadenosine + L-methionine + H(+). Its pathway is cofactor biosynthesis; pyrroloquinoline quinone biosynthesis. In terms of biological role, catalyzes the cross-linking of a glutamate residue and a tyrosine residue in the PqqA protein as part of the biosynthesis of pyrroloquinoline quinone (PQQ). This is PqqA peptide cyclase from Xanthomonas axonopodis pv. citri (strain 306).